A 613-amino-acid polypeptide reads, in one-letter code: MAARDPSTASNYDAWKTKHTTANLRIDFDDKCLRGSVVLELESRTAKESKEIVLDSSYVSVESIKLNDVQTKWEIKERNGPMGSPLHISVPEGADSGEVVRLEMAVKTTPQCTALQWLTPAQTSNKKAPFMFSQAQACHARSLFPCQDTPDVKSTYSFNITSPHVVVASGVANDGDKAEADGGDKVYKYEQNVPIPSYLFALASGDIAMAPIGPRSSVATGPDEVKECQWELEEDMGKFMDAAERLVFPYKWGEYNVLVLPPSFPYGGMENPIYTFATPTIISGDRQNTDVIAHELSHSWSGNLVTSCSWEHYWLNEGWTMYLERRIIAAVRGPAYFDFSALLGWKHLEDAIEEFGADHKFTQLCINHKGIDPDDAFSTVPYEKGFHMVYYLDRLVGRKNFDKFIPYYFTKWANKSLDSYEFKDTFLEFFDKPEYADLKDKIAGIDWEGRFYTPGLPPKPEFDTSLVDVCYALADKWKKGDYTPSSKDVDGWTGNQKLVFLGSVQDFEQPLSAEQAKQLGNAYDLIETKNVELKTAYYLIALRAQDSTAYQGVADLLGQVGRMKFVRPLFRALNKVDRPLALTTFEKNKDFYHPICRAMAEKDLGLSDDAKKE.

A peptide-binding positions include 134–136 (QAQ) and 265–270 (PYGGME). Residue His294 coordinates Zn(2+). Residue Glu295 is the Proton acceptor of the active site. Residues His298 and Glu317 each contribute to the Zn(2+) site. Residue Tyr382 is the Proton donor of the active site.

It belongs to the peptidase M1 family. The cofactor is Zn(2+).

It localises to the cytoplasm. The protein localises to the nucleus. The enzyme catalyses an epoxide + H2O = an ethanediol. Aminopeptidase that preferentially cleaves di- and tripeptides. Also has low epoxide hydrolase activity (in vitro). Can hydrolyze the epoxide leukotriene LTA(4) but it forms preferentially 5,6-dihydroxy-7,9,11,14-eicosatetraenoic acid rather than the cytokine leukotriene B(4) as the product compared to the homologous mammalian enzyme (in vitro). The polypeptide is Leucine aminopeptidase 2 (Pyricularia oryzae (strain 70-15 / ATCC MYA-4617 / FGSC 8958) (Rice blast fungus)).